The primary structure comprises 159 residues: Protein-export protein SecB (159 aa).

The protein belongs to the SecB family. In terms of assembly, homotetramer, a dimer of dimers. One homotetramer interacts with 1 SecA dimer.

The protein localises to the cytoplasm. Functionally, one of the proteins required for the normal export of preproteins out of the cell cytoplasm. It is a molecular chaperone that binds to a subset of precursor proteins, maintaining them in a translocation-competent state. It also specifically binds to its receptor SecA. This chain is Protein-export protein SecB, found in Hahella chejuensis (strain KCTC 2396).